The chain runs to 198 residues: MSNQVNDISYVSLIQVNIVLNKNIILWLGSATPRALRDIDLAQDSVVKIFSFSREPNVVQPWQTTEKEYSSSGFAISGRRILTNAHVVGDHSYLQVRKHGSPTKYKAEVKAFGIFGARRYTFIGETIYALGYPRDGDIISVTKGIVTRVEPQKYAHSSIEILTIQTDACINGGKSGGPVVMGNKVAGVVFENDSPSDK.

A serine protease region spans residues 48 to 198 (KIFSFSREPN…VFENDSPSDK (151 aa)). Residues His-86 and Ser-175 each act as charge relay system in the active site.

It belongs to the peptidase S1B family.

In Arabidopsis thaliana (Mouse-ear cress), this protein is Putative Do-like 15 protein (DEGP15).